The chain runs to 716 residues: Probable calcium-binding mitochondrial carrier K02F3.2 (716 aa).

The tract at residues 1-345 (MSFDHLLTSS…CLKDIQAIDP (345 aa)) is N-terminal domain. 4 consecutive EF-hand domains span residues 93–121 (YNKETVRLLASAADTTKDGDISFEEFCAF), 127–162 (SPDALYLTAFELFDRNASDTISCDEFEAVIRHTQPL), 165–195 (QDFDFSSEFIKRYFGADKQRNVNYHSFCQLL), and 198–233 (FYEEQGIQAFKRYDKNGNGTISSLDFQQIMTTVKGH). Asp106, Thr108, Asp110, Glu117, Asp140, Asn142, Ser144, Thr146, and Glu151 together coordinate Ca(2+). Ca(2+) is bound by residues Asp211, Asn213, Asn215, Thr217, and Asp222. The linker loop domain stretch occupies residues 346–362 (ERLKRVSQMDRLINIKA). The carrier domain stretch occupies residues 372–664 (GTAFLESAYR…RLFYVDFAGS (293 aa)). Solcar repeat units lie at residues 376-468 (LESA…MRDK), 475-560 (IPLY…AKLA), and 568-656 (NSPG…LQRL). 6 helical membrane-spanning segments follow: residues 382–399 (FLLGSVAGACGATAVYPI), 443–462 (GLLPQIVGVAPEKAIKLTMN), 485–498 (GTGGMCQVVFTNPL), 535–554 (GSRACFLRDIPFSAIYFPAY), 574–591 (FASAFIAGVPAAGLVTPA), and 631–650 (GTAARVCRSSPQFAVTLLTY). The C-terminal domain stretch occupies residues 665–716 (RPTGSELATTKTIQDESSTNPDHVGGYKLAAATFSGIEHKFGLFLPKFETSK).

Belongs to the mitochondrial carrier (TC 2.A.29) family. In terms of assembly, homodimer (via N-terminus).

The protein localises to the mitochondrion inner membrane. In terms of biological role, mitochondrial and calcium-binding carrier that catalyzes the calcium-dependent exchange of cytoplasmic glutamate with mitochondrial aspartate across the mitochondrial inner membrane. The protein is Probable calcium-binding mitochondrial carrier K02F3.2 of Caenorhabditis elegans.